Consider the following 589-residue polypeptide: Transmembrane 9 superfamily member 1 (589 aa).

Positions 1-24 are cleaved as a signal peptide; the sequence is MPSSSSAAVLVFLLLVSLLTPTFA. Residues 25-222 lie on the Lumenal side of the membrane; it reads SDSDHKYQAE…YPFFEHQIHW (198 aa). Residues 223–243 form a helical membrane-spanning segment; that stretch reads FSIFNSFMMVIFLTGLVSMIL. The Cytoplasmic portion of the chain corresponds to 244 to 293; it reads MRTLRNDYAKYAREDDDLESLERDVSEESGWKLVHGDVFRPASSLVLLSA. A helical membrane pass occupies residues 294 to 314; it reads VVGTGAQLALLVLLVILMAIV. Residues 315 to 321 lie on the Lumenal side of the membrane; it reads GTLYVGR. The chain crosses the membrane as a helical span at residues 322–342; the sequence is GAIVTTFIVCYALTSFVSGYV. Residues 343–364 lie on the Cytoplasmic side of the membrane; the sequence is SGGMYSRSGGKHWIKCMVLTAS. A helical membrane pass occupies residues 365–385; the sequence is LFPFLCFGIGFLLNTIAIFYG. Topologically, residues 386–395 are lumenal; sequence SLAAIPFGTM. A helical transmembrane segment spans residues 396 to 416; sequence VVVFVIWGFISFPLALLGTVV. The Cytoplasmic segment spans residues 417–448; it reads GRNWSGAPNNPCRVKTIPRPIPEKKWYLTPSV. The helical transmembrane segment at 449-469 threads the bilayer; the sequence is VSLMGGLLPFGSIFIEMYFVF. Over 470 to 481 the chain is Lumenal; that stretch reads TSFWNYKVYYVY. Residues 482 to 502 form a helical membrane-spanning segment; the sequence is GFMLLVFVILVIVTVCVTIVG. Over 503–518 the chain is Cytoplasmic; that stretch reads TYFLLNAENYHWQWTS. A helical membrane pass occupies residues 519–539; that stretch reads FFSAASTAVYVYLYSIYYYYV. The Lumenal portion of the chain corresponds to 540 to 550; it reads KTKMSGFFQTS. A helical membrane pass occupies residues 551-571; that stretch reads FYFGYTMMFCLGLGILCGAVG. The Cytoplasmic segment spans residues 572–589; it reads YLGSNLFVRRIYRNIKCD. An Endoplasmic reticulum export signal motif is present at residues 578 to 583; that stretch reads FVRRIY. The Golgi retention signal motif lies at 587-589; sequence KCD.

The protein belongs to the nonaspanin (TM9SF) (TC 9.A.2) family. As to expression, ubiquitous.

The protein resides in the endosome membrane. The protein localises to the golgi apparatus membrane. The polypeptide is Transmembrane 9 superfamily member 1 (Arabidopsis thaliana (Mouse-ear cress)).